Here is an 819-residue protein sequence, read N- to C-terminus: Metabotropic glutamate receptor-like protein O (819 aa).

Positions M1–S19 are cleaved as a signal peptide. The Extracellular portion of the chain corresponds to N20–K394. N99, N185, N277, N295, N330, and N370 each carry an N-linked (GlcNAc...) asparagine glycan. The chain crosses the membrane as a helical span at residues I395–I415. Residues T416–S428 are Cytoplasmic-facing. Residues P429–F449 traverse the membrane as a helical segment. The Extracellular portion of the chain corresponds to S450–T457. A helical membrane pass occupies residues C458 to I478. Residues K479 to Y503 are Cytoplasmic-facing. A helical membrane pass occupies residues P504–G524. The Extracellular segment spans residues D525 to G550. The helical transmembrane segment at S551–I571 threads the bilayer. At S572–K587 the chain is on the cytoplasmic side. Residues P588–A608 traverse the membrane as a helical segment. At P609–S624 the chain is on the extracellular side. A helical membrane pass occupies residues L625–F645. Topologically, residues G646–T819 are cytoplasmic. The disordered stretch occupies residues K674–T819. Residues N695–N712 are compositionally biased toward basic residues. The span at E726–T739 shows a compositional bias: polar residues. A compositionally biased stretch (basic and acidic residues) spans G748–D768. Residues E769–Q798 are compositionally biased toward acidic residues. The span at E799 to K808 shows a compositional bias: low complexity.

It in the N-terminal section; belongs to the BMP lipoprotein family. The protein in the C-terminal section; belongs to the G-protein coupled receptor 3 family. GABA-B receptor subfamily.

Its subcellular location is the membrane. The polypeptide is Metabotropic glutamate receptor-like protein O (grlO) (Dictyostelium discoideum (Social amoeba)).